Reading from the N-terminus, the 357-residue chain is Low-salt glycan biosynthesis nucleotidyltransferase Agl11 (357 aa).

Positions 108 and 221 each coordinate Mg(2+).

Belongs to the glucose-1-phosphate thymidylyltransferase family. Mg(2+) is required as a cofactor.

It functions in the pathway protein modification; protein glycosylation. The protein operates within cell surface structure biogenesis; S-layer biogenesis. Functionally, nucleotidyltransferase involved in N-glycan biosynthetic pathway that takes place under low-salt conditions (1.75 M instead of 3.4 M). Participates in the formation of the tetrasaccharide present at 'Asn-532' of S-layer glycoprotein Csg, consisting of a sulfated hexose, 2 hexoses and rhamnose. Involved in the addition of final rhamnose (sugar 4) of the tetrasaccharide on the dolichol phosphate carrier. This chain is Low-salt glycan biosynthesis nucleotidyltransferase Agl11 (agl11), found in Haloferax volcanii (strain ATCC 29605 / DSM 3757 / JCM 8879 / NBRC 14742 / NCIMB 2012 / VKM B-1768 / DS2) (Halobacterium volcanii).